Reading from the N-terminus, the 488-residue chain is Inositol 1,3,4-trisphosphate 5/6-kinase 4 (488 aa).

1D-myo-inositol 1,3,4-trisphosphate contacts are provided by Lys-208 and Lys-224. The ATP-grasp domain maps to 246–488 (NACAIVDPIR…RFDQHVQEKH (243 aa)). ATP contacts are provided by Arg-263 and Lys-315. His-326 and Lys-360 together coordinate 1D-myo-inositol 1,3,4-trisphosphate. ATP contacts are provided by residues 349-360 (QEYVDHSSRIFK), Ser-375, and Ser-398. The Mg(2+) site is built by Asp-439, Asp-453, and Asn-455. 2 residues coordinate 1D-myo-inositol 1,3,4-trisphosphate: Asn-455 and Ser-459.

It belongs to the ITPK1 family. Monomer. It depends on Mg(2+) as a cofactor. In terms of tissue distribution, expressed in roots, leaf vasculature, cauline leaves, flower buds and siliques.

The enzyme catalyses 1D-myo-inositol 1,3,4-trisphosphate + ATP = 1D-myo-inositol 1,3,4,5-tetrakisphosphate + ADP + H(+). It catalyses the reaction 1D-myo-inositol 1,3,4-trisphosphate + ATP = 1D-myo-inositol 1,3,4,6-tetrakisphosphate + ADP + H(+). In terms of biological role, kinase that can phosphorylate the inositol polyphosphate Ins(1,3,4)P3 to form InsP4. Also phosphorylates a racemic mixture of Ins(1,4,6)P3 and Ins(3,4,6)P3 to form InsP4. Does not display inositol 3,4,5,6-tetrakisphosphate 1-kinase activity, but possesses inositol 1,4,5,6-tetrakisphosphate and inositol 1,3,4,5-tetrakisphosphate isomerase activity. Ins(1,3,4,6)P4 is an essential molecule in the hexakisphosphate (InsP6) pathway. The sequence is that of Inositol 1,3,4-trisphosphate 5/6-kinase 4 (ITPK4) from Arabidopsis thaliana (Mouse-ear cress).